The sequence spans 186 residues: Nucleoside diphosphate kinase, mitochondrial (186 aa).

The N-terminal 32 residues, 1–32 (MGSLFGRVAALRALLCGPRFQCLLVRPSSGGP), are a transit peptide targeting the mitochondrion. Residues lysine 44, phenylalanine 92, arginine 120, threonine 126, arginine 137, and asparagine 147 each contribute to the ATP site. Histidine 150 serves as the catalytic Pros-phosphohistidine intermediate.

It belongs to the NDK family. Homohexamer. Interacts with OPA1. Interacts with CAPN8. Mg(2+) serves as cofactor. Expressed in the base region of the oxyntic and pyloric mucosae.

Its subcellular location is the mitochondrion intermembrane space. The protein resides in the mitochondrion matrix. It catalyses the reaction a 2'-deoxyribonucleoside 5'-diphosphate + ATP = a 2'-deoxyribonucleoside 5'-triphosphate + ADP. The enzyme catalyses a ribonucleoside 5'-diphosphate + ATP = a ribonucleoside 5'-triphosphate + ADP. Its function is as follows. Major role in the synthesis of nucleoside triphosphates other than ATP. The ATP gamma phosphate is transferred to the NDP beta phosphate via a ping-pong mechanism, using a phosphorylated active-site intermediate. Through the catalyzed exchange of gamma-phosphate between di- and triphosphonucleosides participates in regulation of intracellular nucleotide homeostasis. Binds to anionic phospholipids, predominantly to cardiolipin; the binding inhibits its phosphotransfer activity. Acts as a mitochondria-specific NDK; its association with cardiolipin-containing mitochondrial inner membrane is coupled to respiration suggesting that ADP locally regenerated in the mitochondrion innermembrane space by its activity is directly taken up via ANT ADP/ATP translocase into the matrix space to stimulate respiratory ATP regeneration. Proposed to increase GTP-loading on dynamin-related GTPase OPA1 in mitochondria. In vitro can induce liposome cross-linking suggesting that it can cross-link inner and outer membranes to form contact sites, and promotes intermembrane migration of anionic phosphoplipids. Promotes the redistribution of cardiolipin between the mitochondrial inner membrane and outer membrane which is implicated in pro-apoptotic signaling. The protein is Nucleoside diphosphate kinase, mitochondrial (Nme4) of Mus musculus (Mouse).